The following is a 613-amino-acid chain: Spastin (613 aa).

The tract at residues M1–A42 is disordered. Topologically, residues M1 to P61 are cytoplasmic. Positions S13 to A29 are enriched in low complexity. A compositionally biased stretch (pro residues) spans P30–P39. The helical intramembrane region spans L62–W82. Residues L83–V613 lie on the Cytoplasmic side of the membrane. The region spanning H117–L192 is the MIT domain. Residues S224 to K312 are disordered. Polar residues-rich tracts occupy residues T237 to L257, P264 to V274, and P281 to S299. G379–T386 serves as a coordination point for ATP.

Belongs to the AAA ATPase family. Spastin subfamily. As to quaternary structure, homohexamer. The homohexamer is stabilized by ATP-binding. The homohexamer may adopt a ring conformation through which microtubules pass prior to being severed. Interacts with microtubules.

Its subcellular location is the membrane. The protein localises to the cytoplasm. It is found in the cytoskeleton. The protein resides in the microtubule organizing center. It localises to the centrosome. Its subcellular location is the perinuclear region. The protein localises to the nucleus. It carries out the reaction n ATP + n H2O + a microtubule = n ADP + n phosphate + (n+1) alpha/beta tubulin heterodimers.. Its function is as follows. ATP-dependent microtubule severing protein that specifically recognizes and cuts microtubules that are polyglutamylated. Preferentially recognizes and acts on microtubules decorated with short polyglutamate tails: severing activity increases as the number of glutamates per tubulin rises from one to eight, but decreases beyond this glutamylation threshold. Microtubule severing promotes reorganization of cellular microtubule arrays and the release of microtubules from the centrosome following nucleation. Required for membrane traffic from the endoplasmic reticulum (ER) to the Golgi and for completion of the abscission stage of cytokinesis. Also plays a role in axon growth and the formation of axonal branches. The polypeptide is Spastin (Gallus gallus (Chicken)).